The sequence spans 130 residues: Small ribosomal subunit protein uS9 (130 aa).

This sequence belongs to the universal ribosomal protein uS9 family.

The polypeptide is Small ribosomal subunit protein uS9 (Brevibacillus brevis (strain 47 / JCM 6285 / NBRC 100599)).